The primary structure comprises 491 residues: Lysine--tRNA ligase 1 (491 aa).

2 residues coordinate Mg(2+): Glu-400 and Glu-407.

The protein belongs to the class-II aminoacyl-tRNA synthetase family. As to quaternary structure, homodimer. Requires Mg(2+) as cofactor.

Its subcellular location is the cytoplasm. The catalysed reaction is tRNA(Lys) + L-lysine + ATP = L-lysyl-tRNA(Lys) + AMP + diphosphate. This Mycoplasmopsis pulmonis (strain UAB CTIP) (Mycoplasma pulmonis) protein is Lysine--tRNA ligase 1.